A 492-amino-acid polypeptide reads, in one-letter code: NADH-quinone oxidoreductase subunit N (492 aa).

The next 14 membrane-spanning stretches (helical) occupy residues 13-33, 42-62, 79-99, 111-131, 133-153, 168-188, 211-231, 251-271, 284-304, 318-340, 344-366, 388-408, 426-446, and 463-483; these read MMTP…MDLF, PLAW…IGLI, FGKA…LLAF, GEFY…ASSG, LITL…LAGI, VING…IFGL, YILA…ISSV, FLSV…FITI, SLLF…MIIG, FAYS…SWVM, IWFY…QRIS, AVAM…AGFI, VLAA…FGIF, and PIGL…FGVV.

The protein belongs to the complex I subunit 2 family. NDH-1 is composed of 14 different subunits. Subunits NuoA, H, J, K, L, M, N constitute the membrane sector of the complex.

The protein localises to the cell membrane. The enzyme catalyses a quinone + NADH + 5 H(+)(in) = a quinol + NAD(+) + 4 H(+)(out). Its function is as follows. NDH-1 shuttles electrons from NADH, via FMN and iron-sulfur (Fe-S) centers, to quinones in the respiratory chain. The immediate electron acceptor for the enzyme in this species is believed to be a menaquinone. Couples the redox reaction to proton translocation (for every two electrons transferred, four hydrogen ions are translocated across the cytoplasmic membrane), and thus conserves the redox energy in a proton gradient. The sequence is that of NADH-quinone oxidoreductase subunit N from Geobacillus sp. (strain WCH70).